Consider the following 476-residue polypeptide: Protein THYLAKOID RHODANESE-LIKE, chloroplastic (476 aa).

The N-terminal 21 residues, Met1–Arg21, are a transit peptide targeting the chloroplast. Residues Met1–Ala29 form a disordered region. Low complexity predominate over residues Ala11–Arg21. The transit peptide at Ala22–Pro58 directs the protein to the thylakoid. The chain crosses the membrane as a helical span at residues Leu100–Gly120. Residues Glu140–Ala246 enclose the Rhodanese domain. A run of 2 helical transmembrane segments spans residues Leu264 to Ile284 and Val287 to Ala307. The tract at residues Leu342 to Pro476 is disordered. Residues Pro351 to Ala389 are compositionally biased toward low complexity. Residues Leu403–Leu412 show a composition bias toward pro residues. Low complexity predominate over residues Glu425 to Glu446. The segment covering Ala447–Pro476 has biased composition (pro residues).

In terms of assembly, component of high molecular weight thylakoid LFNRs-containing protein complexes containing LIR1, LFNR1, LFNR2, TIC62 and TROL proteins.

The protein resides in the plastid. It is found in the chloroplast thylakoid membrane. Rhodanese domain-containing protein required for anchoring ferredoxin--NADP reductase to the thylakoid membranes and sustaining efficient linear electron flow (LEF). The sequence is that of Protein THYLAKOID RHODANESE-LIKE, chloroplastic from Oryza sativa subsp. indica (Rice).